Here is an 833-residue protein sequence, read N- to C-terminus: Translation initiation factor IF-2 (833 aa).

The region spanning 331 to 501 (TRAPVVTVMG…LLIAEMQDLK (171 aa)) is the tr-type G domain. A G1 region spans residues 340–347 (GHVDHGKT). A GTP-binding site is contributed by 340 to 347 (GHVDHGKT). The tract at residues 365–369 (GITQH) is G2. The interval 387-390 (DTPG) is G3. Residues 387–391 (DTPGH) and 441–444 (NKID) each bind GTP. The interval 441–444 (NKID) is G4. The tract at residues 477-479 (SAL) is G5.

The protein belongs to the TRAFAC class translation factor GTPase superfamily. Classic translation factor GTPase family. IF-2 subfamily.

It is found in the cytoplasm. One of the essential components for the initiation of protein synthesis. Protects formylmethionyl-tRNA from spontaneous hydrolysis and promotes its binding to the 30S ribosomal subunits. Also involved in the hydrolysis of GTP during the formation of the 70S ribosomal complex. This chain is Translation initiation factor IF-2, found in Rickettsia canadensis (strain McKiel).